A 621-amino-acid polypeptide reads, in one-letter code: Chaperone protein dnaK (621 aa).

The interval 597 to 621 is disordered; that stretch reads VYSSTQQDNSKTEDGSVIDTNSKEA.

Belongs to the heat shock protein 70 family.

The protein localises to the plastid. It localises to the chloroplast. Its function is as follows. Acts as a chaperone. This is Chaperone protein dnaK from Gracilaria tenuistipitata var. liui (Red alga).